We begin with the raw amino-acid sequence, 483 residues long: Leukocyte immunoglobulin-like receptor subfamily A member 2 (483 aa).

Residues 1–23 (MTPILTVLICLGLSLGPRTHVQA) form the signal peptide. Residues 24-449 (GHLPKPTLWA…QHPQDYTVEN (426 aa)) are Extracellular-facing. 4 Ig-like C2-type domains span residues 27-113 (PKPT…DPLE), 117-222 (TGAY…GVSK), 224-313 (PSLS…DPLD), and 324-413 (PSLS…SDPL). C49 and C97 are disulfide-bonded. N64, N103, and N138 each carry an N-linked (GlcNAc...) asparagine glycan. Intrachain disulfides connect C143–C195 and C244–C295. N-linked (GlcNAc...) asparagine glycosylation is found at N279, N300, and N339. An intrachain disulfide couples C344 to C395. A 3'-nitrotyrosine modification is found at Y404. N-linked (GlcNAc...) asparagine glycosylation occurs at N429. The chain crosses the membrane as a helical span at residues 450–470 (LIRMGVAGLVLVVLGILLFEA). Topologically, residues 471 to 483 (QHSQRSLQDAAGR) are cytoplasmic.

Homodimer. Detected on the surface of all peripheral blood monocytes, neutrophils, basophils and eosinophils (at protein level). Expression levels are very low or not detectable on monocytes, T-cells, B-cells, dendritic cells and natural killer (NK) cells.

The protein resides in the cell membrane. It is found in the secreted. Its function is as follows. Part of the innate immune responses against microbial infection. Specifically recognizes a set of N-terminally truncated immunoglobulins that are produced via cleavage by proteases from a range of pathogenic bacteria and fungi, including L.pneumophila, M.hyorhinis, S.pneumoniae, S.aureus and C.albicans. Recognizes epitopes that are in part in the variable region of the immunoglobulin light chains, but requires also the constant region for signaling. Binds to a subset of cleaved IgM, IgG3 and IgG4 molecules, but does not bind cleaved IgA1. Binding of N-terminally truncated immunoglobulins mediates activation of neutrophils. In monocytes, activation leads to the release of CSF2, CF3, IL6, CXCL8 and CCL3 and down-regulates responses to bacterial lipopolysaccharide (LPS), possibly via down-regulation of TLR4 expression and reduced signaling via TLR4. In eosinophils, activation by ligand binding leads to the release of RNASE2, IL4 and leukotriene C4. Does not bind class I MHC antigens. This chain is Leukocyte immunoglobulin-like receptor subfamily A member 2 (LILRA2), found in Homo sapiens (Human).